Here is a 435-residue protein sequence, read N- to C-terminus: F-box/FBD/LRR-repeat protein At5g44980 (435 aa).

Positions 3 to 49 (RDYISELPDSLLTQILLELRTKDSVKTSVLSKRWRNLWLNVPGLELF) constitute an F-box domain. LRR repeat units lie at residues 88-114 (CKGY…YVFM), 138-162 (LHNV…KLEN), 165-190 (HGED…ELIR), 191-217 (PFDI…TLHF), 250-275 (VKNL…DLRM), and 324-349 (MWSS…ILEY). The region spanning 355–405 (REQVDFTNVPQCLISTLEYVEIKEPNEKSTIKLVNYFLENSAVLKKLTLRF) is the FBD domain.

The polypeptide is F-box/FBD/LRR-repeat protein At5g44980 (Arabidopsis thaliana (Mouse-ear cress)).